The chain runs to 660 residues: FAST kinase domain-containing protein 3, mitochondrial (660 aa).

Residues 1-57 (MALVTLRRNLYHLSDFRIHGALAALKTQQVNHVHKTVKEHLCPWFWSQHPGPIRVRF) constitute a mitochondrion transit peptide. Residues 591-649 (VALCIDGPKRFCLNSKHLLGKEATKQRHLRLLGYQVVQIPYYEIEMLKSRLELVDYLQG) form the RAP domain.

It belongs to the FAST kinase family.

It localises to the mitochondrion. Its function is as follows. Required for normal mitochondrial respiration. Increases steady-state levels and half-lives of a subset of mature mitochondrial mRNAs MT-ND2, MT-ND3, MT-CYTB, MT-CO2, and MT-ATP8/6. Promotes MT-CO1 mRNA translation and increases mitochondrial complex IV assembly and activity. The polypeptide is FAST kinase domain-containing protein 3, mitochondrial (FASTKD3) (Bos taurus (Bovine)).